Consider the following 85-residue polypeptide: DNA-directed RNA polymerase subunit omega (85 aa).

It belongs to the RNA polymerase subunit omega family. As to quaternary structure, the RNAP catalytic core consists of 2 alpha, 1 beta, 1 beta' and 1 omega subunit. When a sigma factor is associated with the core the holoenzyme is formed, which can initiate transcription.

It carries out the reaction RNA(n) + a ribonucleoside 5'-triphosphate = RNA(n+1) + diphosphate. Its function is as follows. Promotes RNA polymerase assembly. Latches the N- and C-terminal regions of the beta' subunit thereby facilitating its interaction with the beta and alpha subunits. The protein is DNA-directed RNA polymerase subunit omega of Latilactobacillus sakei subsp. sakei (strain 23K) (Lactobacillus sakei subsp. sakei).